The sequence spans 1085 residues: Aminopeptidase N (1085 aa).

Positions 1–30 (MKLTKGCAYKYIIFTVLILANILYDNKKRC) form a signal peptide, required for ER targeting and membrane association; not cleaved. A sufficient for targeting to the food vacuole region spans residues 1-200 (MKLTKGCAYK…VKKNEPKIHY (200 aa)). Residues 108 to 130 (EKGDNNNNNHQNNNGNDNKKRLG) form a disordered region. The span at 112–123 (NNNNNHQNNNGN) shows a compositional bias: low complexity. Positions 319, 460, 461, and 463 each coordinate a peptide. Position 496 (His-496) interacts with Zn(2+). The active-site Proton acceptor is the Glu-497. Zn(2+)-binding residues include His-500 and Glu-519.

This sequence belongs to the peptidase M1 family. Heterodimer of the p68 form and the p35 form which are derived from the p120 precursor. Zn(2+) serves as cofactor. In terms of processing, the full length protein appears to be cleaved into a 120 kDa precursor. This precursor is then proteolytically cleaved at the N-terminus generating a 96 kDa form which is further processed at the C-terminus into 68 kDa and 35 kDa forms that remain associated.

It localises to the parasitophorous vacuole membrane. It is found in the nucleus. The protein localises to the cytoplasm. Its subcellular location is the vacuole lumen. Its activity is regulated as follows. Inhibited by 1,10-phenanthroline, EDTA and bestatin. Inhibited by (Benzyl)Tyr-Ala (BTA). Activity is not affected by phosphoramidin, PMSF, leupeptin, iodoacetamide or pepstatin. Its function is as follows. Displays aminopeptidase activity with a broad substrate specificity. Preferentially, cleaves after Leu and Met, but also cleaves after Ala and Arg. Low activity towards Lys, Phe, Tyr, Trp, Gln, Ser and Gly and negligible activity towards Glu, Asp, Pro, Ile, Thr, Val, His and Asn. Has dipeptidase activity. Plays a role in the terminal stages of host hemoglobin digestion by cleaving the N-terminal residue of small hemoglobin-derived oligopeptides. The polypeptide is Aminopeptidase N (Plasmodium falciparum (isolate 3D7)).